The following is a 131-amino-acid chain: Sperm microtubule inner protein 11 (131 aa).

The tract at residues 18-44 is disordered; it reads KKRNTTEETNQKEPEPTRLPPIISKDG. Residues 21 to 33 show a composition bias toward basic and acidic residues; that stretch reads NTTEETNQKEPEP.

As to quaternary structure, microtubule inner protein component of sperm flagellar doublet microtubules.

The protein resides in the cytoplasm. Its subcellular location is the cytoskeleton. It localises to the flagellum axoneme. In terms of biological role, microtubule inner protein (MIP) part of the dynein-decorated doublet microtubules (DMTs) in flagellum axoneme. May serve to reinforce and thus stabilize the microtubule structure in the sperm flagella. This is Sperm microtubule inner protein 11 from Homo sapiens (Human).